The chain runs to 701 residues: Elongation factor G (701 aa).

Positions 8 to 290 (SRYRNIGISA…AVIEYLPAPT (283 aa)) constitute a tr-type G domain. Residues 17–24 (AHIDAGKT), 88–92 (DTPGH), and 142–145 (NKMD) each bind GTP.

It belongs to the TRAFAC class translation factor GTPase superfamily. Classic translation factor GTPase family. EF-G/EF-2 subfamily.

It is found in the cytoplasm. Functionally, catalyzes the GTP-dependent ribosomal translocation step during translation elongation. During this step, the ribosome changes from the pre-translocational (PRE) to the post-translocational (POST) state as the newly formed A-site-bound peptidyl-tRNA and P-site-bound deacylated tRNA move to the P and E sites, respectively. Catalyzes the coordinated movement of the two tRNA molecules, the mRNA and conformational changes in the ribosome. The chain is Elongation factor G from Actinobacillus pleuropneumoniae serotype 5b (strain L20).